The following is a 407-amino-acid chain: Probable peptidoglycan glycosyltransferase FtsW (407 aa).

The Cytoplasmic segment spans residues 1–25; it reads MSIDFRNIIKPYPSPIITGRGIDLD. Residues 26–46 traverse the membrane as a helical segment; the sequence is FPMLAGCLALLGLGLVMITSA. The Periplasmic portion of the chain corresponds to 47–65; that stretch reads SSEVAAVQSGNTLYMMIRH. A helical membrane pass occupies residues 66-86; sequence LVYLVIGLGACIVTMMIPIAT. Residues 87-89 are Cytoplasmic-facing; that stretch reads WQR. The helical transmembrane segment at 90 to 110 threads the bilayer; that stretch reads LGWLMLIGAFGLLIMVILPGI. Residues 111 to 119 are Periplasmic-facing; the sequence is GREVNGSMR. Residues 120–140 form a helical membrane-spanning segment; the sequence is WIGFGAFNVQPSEIAKVFVVI. Residues 141–155 lie on the Cytoplasmic side of the membrane; that stretch reads YLAGYLVRRQKEVRE. The chain crosses the membrane as a helical span at residues 156–176; that stretch reads SWMGFFKPFIVLLPMAGLLLM. Residues 177 to 181 are Periplasmic-facing; the sequence is EPDFG. A helical transmembrane segment spans residues 182–202; sequence ATVVMMGAAAAMLFLGGVGLF. Position 203 (Arg-203) is a topological domain, cytoplasmic. Residues 204–224 form a helical membrane-spanning segment; that stretch reads FTLMVVLAVAAVTVLVQAQPY. Topologically, residues 225-283 are periplasmic; that stretch reads RMARLITFTDPWSDQFGSGYQLTQALIAFGRGEWLGVGLGNSVQKQFYLPEAHTDFVFS. A helical transmembrane segment spans residues 284–304; it reads VLAEELGVVGSLCTVALFVFV. At 305–321 the chain is on the cytoplasmic side; it reads CVRGMYIGMWAEKAKQY. Residues 322–342 traverse the membrane as a helical segment; that stretch reads FAAYVAYGLSFLWIGQFLINI. At 343-355 the chain is on the periplasmic side; the sequence is GVNVGLLPTKGLT. Residues 356 to 376 traverse the membrane as a helical segment; that stretch reads LPFLSYGGSSLVICCACLGLL. Over 377–407 the chain is Cytoplasmic; it reads LRIEWESRTHLGSEEMEFSESDFAEEPTHGR.

Belongs to the SEDS family. FtsW subfamily.

It is found in the cell inner membrane. The enzyme catalyses [GlcNAc-(1-&gt;4)-Mur2Ac(oyl-L-Ala-gamma-D-Glu-L-Lys-D-Ala-D-Ala)](n)-di-trans,octa-cis-undecaprenyl diphosphate + beta-D-GlcNAc-(1-&gt;4)-Mur2Ac(oyl-L-Ala-gamma-D-Glu-L-Lys-D-Ala-D-Ala)-di-trans,octa-cis-undecaprenyl diphosphate = [GlcNAc-(1-&gt;4)-Mur2Ac(oyl-L-Ala-gamma-D-Glu-L-Lys-D-Ala-D-Ala)](n+1)-di-trans,octa-cis-undecaprenyl diphosphate + di-trans,octa-cis-undecaprenyl diphosphate + H(+). It participates in cell wall biogenesis; peptidoglycan biosynthesis. Functionally, peptidoglycan polymerase that is essential for cell division. This is Probable peptidoglycan glycosyltransferase FtsW from Pseudomonas fluorescens (strain SBW25).